The chain runs to 185 residues: Ribosome-recycling factor (185 aa).

The protein belongs to the RRF family.

The protein localises to the cytoplasm. Responsible for the release of ribosomes from messenger RNA at the termination of protein biosynthesis. May increase the efficiency of translation by recycling ribosomes from one round of translation to another. The protein is Ribosome-recycling factor of Enterococcus faecalis (strain ATCC 700802 / V583).